An 853-amino-acid chain; its full sequence is Trimethylguanosine synthase (853 aa).

The disordered stretch occupies residues 53–80; sequence NNSGDQATEEEEGGYSCGTAESHDSKGI. Serine 55 bears the Phosphoserine mark. Position 60 is a phosphothreonine (threonine 60). Serine 85, serine 89, serine 96, and serine 141 each carry phosphoserine. Tyrosine 146 bears the Phosphotyrosine mark. A disordered region spans residues 149 to 187; the sequence is DDILASDDPSSIEQYENTRTYELQSKKDTETENPPVENT. Serine 154 bears the Phosphoserine mark. Residues 156–171 are compositionally biased toward polar residues; it reads DPSSIEQYENTRTYEL. Position 189 is a phosphoserine (serine 189). 2 disordered regions span residues 334–461 and 527–632; these read SQLD…GGIP and DEEA…KKVN. A compositionally biased stretch (low complexity) spans 367–382; it reads NGGTNEESNSSGNTNT. Residues serine 412, serine 438, and serine 578 each carry the phosphoserine modification. The span at 431-442 shows a compositional bias: acidic residues; the sequence is DIDENPASDFDD. Positions 564–578 are enriched in polar residues; sequence ETNNPEPEKCQSVSS. Residues 608–619 are compositionally biased toward basic and acidic residues; sequence PDSRQAETEAEV. The span at 620–630 shows a compositional bias: basic residues; it reads KKKKNKKKNKK. Residues 631–846 are sufficient for catalytic activity; it reads VNGLPPEIAA…TITAYFGDLI (216 aa). Aspartate 719 is an S-adenosyl-L-methionine binding site. Tryptophan 766 contacts N(7)-methylguanosine.

The protein belongs to the methyltransferase superfamily. Trimethylguanosine synthase family. In terms of assembly, may form homooligomers. Interacts with CREBBP/CBP, EED/WAIT1, EP300/P300, NCOA6/PRIP, PPARBP/PBP and SMN. In terms of tissue distribution, ubiquitously expressed. High expression in heart, skeletal muscle, kidney, liver and placenta.

It localises to the cytoplasm. Its subcellular location is the nucleus. The protein resides in the cajal body. The protein localises to the nucleolus. The catalysed reaction is a 5'-end (N(7)-methyl 5'-triphosphoguanosine)-ribonucleoside in snRNA + S-adenosyl-L-methionine = a 5'-end (N(2),N(7)-dimethyl 5'-triphosphoguanosine)-ribonucleoside in snRNA + S-adenosyl-L-homocysteine + H(+). It carries out the reaction a 5'-end (N(7)-methyl 5'-triphosphoguanosine)-ribonucleoside in snoRNA + S-adenosyl-L-methionine = a 5'-end (N(2),N(7)-dimethyl 5'-triphosphoguanosine)-ribonucleoside in snoRNA + S-adenosyl-L-homocysteine + H(+). It catalyses the reaction a 5'-end (N(2),N(7)-dimethyl 5'-triphosphoguanosine)-ribonucleoside in snRNA + S-adenosyl-L-methionine = a 5'-end (N(2),N(2),N(7)-trimethyl 5'-triphosphoguanosine)-ribonucleoside in snRNA + S-adenosyl-L-homocysteine + H(+). The enzyme catalyses a 5'-end (N(2),N(7)-dimethyl 5'-triphosphoguanosine)-ribonucleoside in snoRNA + S-adenosyl-L-methionine = a 5'-end (N(2),N(2),N(7)-trimethyl 5'-triphosphoguanosine)-ribonucleoside in snoRNA + S-adenosyl-L-homocysteine + H(+). In terms of biological role, catalyzes the 2 serial methylation steps for the conversion of the 7-monomethylguanosine (m(7)G) caps of snRNAs and snoRNAs to a 2,2,7-trimethylguanosine (m(2,2,7)G) cap structure. The enzyme is specific for guanine, and N7 methylation must precede N2 methylation. Hypermethylation of the m7G cap of U snRNAs leads to their concentration in nuclear foci, their colocalization with coilin and the formation of canonical Cajal bodies (CBs). Plays a role in transcriptional regulation. This is Trimethylguanosine synthase (TGS1) from Homo sapiens (Human).